The chain runs to 159 residues: Urease accessory protein UreE (159 aa).

This sequence belongs to the UreE family.

It localises to the cytoplasm. Its function is as follows. Involved in urease metallocenter assembly. Binds nickel. Probably functions as a nickel donor during metallocenter assembly. The sequence is that of Urease accessory protein UreE from Pseudomonas entomophila (strain L48).